Reading from the N-terminus, the 329-residue chain is Cathepsin K (329 aa).

Residues 1–15 (MWVFKFLLLPVVSFA) form the signal peptide. Residues 16–114 (LSPEETLDTQ…TLYTPEWEGR (99 aa)) constitute a propeptide, activation peptide. N-linked (GlcNAc...) asparagine glycosylation occurs at asparagine 103. Disulfide bonds link cysteine 136-cysteine 177 and cysteine 170-cysteine 210. Residue cysteine 139 is part of the active site. A glycan (N-linked (GlcNAc...) asparagine) is linked at asparagine 213. Cysteine 269 and cysteine 318 are oxidised to a cystine. Catalysis depends on residues histidine 276 and asparagine 296.

It belongs to the peptidase C1 family.

The protein localises to the lysosome. It is found in the secreted. Its subcellular location is the apical cell membrane. It catalyses the reaction Broad proteolytic activity. With small-molecule substrates and inhibitors, the major determinant of specificity is P2, which is preferably Leu, Met &gt; Phe, and not Arg.. In terms of biological role, thiol protease involved in osteoclastic bone resorption and may participate partially in the disorder of bone remodeling. Displays potent endoprotease activity against fibrinogen at acid pH. May play an important role in extracellular matrix degradation. Involved in the release of thyroid hormone thyroxine (T4) by limited proteolysis of TG/thyroglobulin in the thyroid follicle lumen. The chain is Cathepsin K (Ctsk) from Rattus norvegicus (Rat).